Consider the following 1261-residue polypeptide: Mediator of RNA polymerase II transcription subunit 14 (1261 aa).

Positions 1-11 (MPNGKQQHEVT) are enriched in basic and acidic residues. Disordered stretches follow at residues 1 to 21 (MPNG…EIPH), 413 to 435 (NETA…GETE), and 1193 to 1220 (DNDI…ENET). Over residues 417–427 (IVDDNDNDNDD) the composition is skewed to acidic residues. Over residues 1205 to 1220 (QNEKENSKTTSKENET) the composition is skewed to basic and acidic residues.

The protein belongs to the Mediator complex subunit 14 family. Component of the Mediator complex.

The protein resides in the nucleus. Its function is as follows. Component of the Mediator complex, a coactivator involved in the regulated transcription of nearly all RNA polymerase II-dependent genes. Mediator functions as a bridge to convey information from gene-specific regulatory proteins to the basal RNA polymerase II transcription machinery. Mediator is recruited to promoters by direct interactions with regulatory proteins and serves as a scaffold for the assembly of a functional preinitiation complex with RNA polymerase II and the general transcription factors. The chain is Mediator of RNA polymerase II transcription subunit 14 (MED14) from Candida albicans (strain SC5314 / ATCC MYA-2876) (Yeast).